The following is a 256-amino-acid chain: ATP synthase subunit a (256 aa).

The propeptide at 1–8 is removed in mature form; the sequence is MYQFNFIL. A run of 7 helical transmembrane segments spans residues 34-54, 92-112, 121-141, 148-168, 186-206, 209-229, and 230-250; these read ITNIGLYLSIGLLLTLGYHLL, YFPFIYALFIFILVNNLIGMV, HFILTFSMSFTIVLGATFLGL, FFSLFVPSGCPLGLLPLLVLI, ANILSGHMLLSILSGFTYNIM, GILFFFLGLIPLAFIIAFSGL, and ELAIAFIQAQVFVVLTCSYIK.

The protein belongs to the ATPase A chain family. As to quaternary structure, F-type ATPases have 2 components, CF(1) - the catalytic core - and CF(0) - the membrane proton channel. CF(1) has five subunits: alpha(3), beta(3), gamma(1), delta(1), epsilon(1). CF(0) has three main subunits: a, b and c.

Its subcellular location is the mitochondrion inner membrane. Mitochondrial membrane ATP synthase (F(1)F(0) ATP synthase or Complex V) produces ATP from ADP in the presence of a proton gradient across the membrane which is generated by electron transport complexes of the respiratory chain. F-type ATPases consist of two structural domains, F(1) - containing the extramembraneous catalytic core and F(0) - containing the membrane proton channel, linked together by a central stalk and a peripheral stalk. During catalysis, ATP synthesis in the catalytic domain of F(1) is coupled via a rotary mechanism of the central stalk subunits to proton translocation. Key component of the proton channel; it may play a direct role in the translocation of protons across the membrane. This chain is ATP synthase subunit a (atp6), found in Emericella nidulans (Aspergillus nidulans).